The sequence spans 676 residues: Cysteine-rich receptor-like protein kinase 8 (676 aa).

A signal peptide spans 1–34; the sequence is MYIVSMFGLAGLEALICFIFLFLFSFLTSFKASA. Topologically, residues 35–291 are extracellular; sequence QNPFYLNHDC…IPGKSGNSTV (257 aa). 2 consecutive Gnk2-homologous domains span residues 38-142 and 151-255; these read FYLN…HKNF and ELIM…LYAF. Residues N46, N53, N71, N114, N159, N187, N257, and N288 are each glycosylated (N-linked (GlcNAc...) asparagine). Residues 292-312 traverse the membrane as a helical segment; that stretch reads LVVAIVVLAVLLFIALVGYCF. Residues 313 to 676 lie on the Cytoplasmic side of the membrane; it reads LAQRTKKTFD…DELITDLYPR (364 aa). In terms of domain architecture, Protein kinase spans 353–639; that stretch reads FAESNKIGRG…TLPVPRQPGF (287 aa). ATP contacts are provided by residues 359–367 and K381; that span reads IGRGGFGEV. Y426 carries the phosphotyrosine modification. The active-site Proton acceptor is the D478. S482 bears the Phosphoserine mark. T518 carries the post-translational modification Phosphothreonine. Y526 carries the post-translational modification Phosphotyrosine. Positions 640–666 are disordered; sequence FIQSSPVKDPTDSDQSTTTKSTPASID. The span at 652-662 shows a compositional bias: low complexity; sequence SDQSTTTKSTP.

It belongs to the protein kinase superfamily. Ser/Thr protein kinase family. CRK subfamily.

Its subcellular location is the membrane. It carries out the reaction L-seryl-[protein] + ATP = O-phospho-L-seryl-[protein] + ADP + H(+). It catalyses the reaction L-threonyl-[protein] + ATP = O-phospho-L-threonyl-[protein] + ADP + H(+). The polypeptide is Cysteine-rich receptor-like protein kinase 8 (CRK8) (Arabidopsis thaliana (Mouse-ear cress)).